Reading from the N-terminus, the 130-residue chain is Small ribosomal subunit protein bS6 (130 aa).

The interval 96-130 is disordered; it reads VTEASPMAKARDERDSRRSPSDDRIEEESAEENAE. The span at 104 to 118 shows a compositional bias: basic and acidic residues; the sequence is KARDERDSRRSPSDD. The span at 119 to 130 shows a compositional bias: acidic residues; it reads RIEEESAEENAE.

The protein belongs to the bacterial ribosomal protein bS6 family.

Binds together with bS18 to 16S ribosomal RNA. This chain is Small ribosomal subunit protein bS6, found in Shewanella denitrificans (strain OS217 / ATCC BAA-1090 / DSM 15013).